The following is a 295-amino-acid chain: MVLPDIKKGKDMINILPFEIISRNTKTLLITYISSVDITHEGMKKVLESLRSKQGIISEYLLDKLLDESLIDKDKGKEFLITTGVINKTKTSPLWVNSVIISDVPHLFSNAREQWKCDGVFVSHIIDIKDNNINVSDSTLIWLHLENYHSDIVKRIYSKFESNPGVAFIQSYYLKESFRIDGVYSPDLGTPCHFCHIERWLSREEKSFRRNEMSWANLLQLLKKYQMTLPALALGESERGFSYHLIKRRLQELTGTSLVKSHVDNFMSSVSADLITCILCKEPVIHWQACSCLER.

The protein resides in the cytoplasm. Necessary to process the inactive microcin B17 (McbA) precursor into the active peptide. This is Microcin B17-processing protein McbB (mcbB) from Escherichia coli.